Here is a 659-residue protein sequence, read N- to C-terminus: DNA ligase (659 aa).

NAD(+) contacts are provided by residues 32–36 (DAEYD), 81–82 (SL), and glutamate 110. The active-site N6-AMP-lysine intermediate is lysine 112. NAD(+) is bound by residues arginine 133, glutamate 168, lysine 284, and lysine 308. Residues cysteine 402, cysteine 405, cysteine 420, and cysteine 425 each coordinate Zn(2+). A BRCT domain is found at 582–659 (AKPQIFAGKS…SEEEFAELLP (78 aa)).

This sequence belongs to the NAD-dependent DNA ligase family. LigA subfamily. It depends on Mg(2+) as a cofactor. Requires Mn(2+) as cofactor.

It catalyses the reaction NAD(+) + (deoxyribonucleotide)n-3'-hydroxyl + 5'-phospho-(deoxyribonucleotide)m = (deoxyribonucleotide)n+m + AMP + beta-nicotinamide D-nucleotide.. Its function is as follows. DNA ligase that catalyzes the formation of phosphodiester linkages between 5'-phosphoryl and 3'-hydroxyl groups in double-stranded DNA using NAD as a coenzyme and as the energy source for the reaction. It is essential for DNA replication and repair of damaged DNA. This is DNA ligase from Desulfitobacterium hafniense (strain Y51).